The chain runs to 379 residues: MTNIRKSHPLLKIINNSLIDLPTPPNISSLWNFGSLLGACLTIQIITGLFLAMHYTADTTTAFSSVAHICRDVNYGWTIRYLHANGASMFFLCLFIHVGRGLYYGSFTLLETWNVGIILLFSVMATAFMGYVLPWGQMSFWGATVITNLLSAIPYVGTDLVEWIWGGFSVSKATLTRFFALHFILPFIISALVMIHLLFLHETGSNNPLGMPSNSDKIPFHPYYTTKDFLGLLLLTLLLMTMALFYPDLLGDPDNYTPANPLNTPPHIKPEWYFLFAYAILRSIPNKLGGVMALILSILILMVIPFLQPNKQQTMMFRPLSQFLFWILVADLLTLTWIGGQPVEEPFINIGQMASMLYFSLMVFIMPTTCLIENKMLKW.

4 helical membrane passes run 33-53 (FGSL…FLAM), 77-98 (WTIR…FIHV), 113-133 (WNVG…GYVL), and 178-198 (FFAL…IHLL). His83 and His97 together coordinate heme b. The heme b site is built by His182 and His196. Position 201 (His201) interacts with a ubiquinone. 4 helical membrane-spanning segments follow: residues 226-246 (TKDF…ALFY), 288-308 (LGGV…PFLQ), 320-340 (LSQF…WIGG), and 347-367 (FINI…FIMP).

It belongs to the cytochrome b family. As to quaternary structure, the cytochrome bc1 complex contains 11 subunits: 3 respiratory subunits (MT-CYB, CYC1 and UQCRFS1), 2 core proteins (UQCRC1 and UQCRC2) and 6 low-molecular weight proteins (UQCRH/QCR6, UQCRB/QCR7, UQCRQ/QCR8, UQCR10/QCR9, UQCR11/QCR10 and a cleavage product of UQCRFS1). This cytochrome bc1 complex then forms a dimer. It depends on heme b as a cofactor.

The protein localises to the mitochondrion inner membrane. Its function is as follows. Component of the ubiquinol-cytochrome c reductase complex (complex III or cytochrome b-c1 complex) that is part of the mitochondrial respiratory chain. The b-c1 complex mediates electron transfer from ubiquinol to cytochrome c. Contributes to the generation of a proton gradient across the mitochondrial membrane that is then used for ATP synthesis. The chain is Cytochrome b (MT-CYB) from Lepilemur dorsalis (Grey-backed sportive lemur).